A 316-amino-acid chain; its full sequence is Protein C4 (316 aa).

It belongs to the poxviridae OPG031 protein family.

The protein localises to the host cytoplasm. It is found in the host nucleus. Plays a role in the inhibition of host NF-kappa-B activation. Mechanistically, blocks the subunit p65/RELA translocation into the host nucleus. The sequence is that of Protein C4 (OPG031) from Homo sapiens (Human).